The chain runs to 753 residues: Photosystem I P700 chlorophyll a apoprotein A1 (753 aa).

The next 8 membrane-spanning stretches (helical) occupy residues isoleucine 73–alanine 96, leucine 159–histidine 182, leucine 198–leucine 222, threonine 294–tyrosine 312, tryptophan 349–tyrosine 372, leucine 388–valine 414, alanine 436–histidine 458, and phenylalanine 534–leucine 552. 2 residues coordinate [4Fe-4S] cluster: cysteine 576 and cysteine 585. The next 2 helical transmembrane spans lie at histidine 592–tryptophan 613 and leucine 667–phenylalanine 689. Residue histidine 678 coordinates chlorophyll a'. Chlorophyll a is bound by residues methionine 686 and tyrosine 694. Tryptophan 695 contacts phylloquinone. The chain crosses the membrane as a helical span at residues alanine 727–alanine 747.

Belongs to the PsaA/PsaB family. As to quaternary structure, the PsaA/B heterodimer binds the P700 chlorophyll special pair and subsequent electron acceptors. PSI consists of a core antenna complex that captures photons, and an electron transfer chain that converts photonic excitation into a charge separation. The eukaryotic PSI reaction center is composed of at least 11 subunits. P700 is a chlorophyll a/chlorophyll a' dimer, A0 is one or more chlorophyll a, A1 is one or both phylloquinones and FX is a shared 4Fe-4S iron-sulfur center. serves as cofactor.

It localises to the plastid. Its subcellular location is the chloroplast thylakoid membrane. The enzyme catalyses reduced [plastocyanin] + hnu + oxidized [2Fe-2S]-[ferredoxin] = oxidized [plastocyanin] + reduced [2Fe-2S]-[ferredoxin]. In terms of biological role, psaA and PsaB bind P700, the primary electron donor of photosystem I (PSI), as well as the electron acceptors A0, A1 and FX. PSI is a plastocyanin-ferredoxin oxidoreductase, converting photonic excitation into a charge separation, which transfers an electron from the donor P700 chlorophyll pair to the spectroscopically characterized acceptors A0, A1, FX, FA and FB in turn. Oxidized P700 is reduced on the lumenal side of the thylakoid membrane by plastocyanin. The chain is Photosystem I P700 chlorophyll a apoprotein A1 from Pinus thunbergii (Japanese black pine).